Consider the following 496-residue polypeptide: Glycerol kinase 2 (496 aa).

Thr11 serves as a coordination point for ADP. ATP-binding residues include Thr11, Thr12, and Ser13. Thr11 contributes to the sn-glycerol 3-phosphate binding site. Arg15 contributes to the ADP binding site. Arg81, Glu82, Tyr133, and Asp242 together coordinate sn-glycerol 3-phosphate. Glycerol-binding residues include Arg81, Glu82, Tyr133, Asp242, and Gln243. 2 residues coordinate ADP: Thr264 and Gly307. 4 residues coordinate ATP: Thr264, Gly307, Gln311, and Gly408. 2 residues coordinate ADP: Gly408 and Asn412.

Belongs to the FGGY kinase family.

It catalyses the reaction glycerol + ATP = sn-glycerol 3-phosphate + ADP + H(+). The protein operates within polyol metabolism; glycerol degradation via glycerol kinase pathway; sn-glycerol 3-phosphate from glycerol: step 1/1. Inhibited by fructose 1,6-bisphosphate (FBP). In terms of biological role, key enzyme in the regulation of glycerol uptake and metabolism. Catalyzes the phosphorylation of glycerol to yield sn-glycerol 3-phosphate. The polypeptide is Glycerol kinase 2 (Thermotoga maritima (strain ATCC 43589 / DSM 3109 / JCM 10099 / NBRC 100826 / MSB8)).